The chain runs to 122 residues: Ribosome-binding factor A (122 aa).

This sequence belongs to the RbfA family. As to quaternary structure, monomer. Binds 30S ribosomal subunits, but not 50S ribosomal subunits or 70S ribosomes.

It localises to the cytoplasm. Functionally, one of several proteins that assist in the late maturation steps of the functional core of the 30S ribosomal subunit. Associates with free 30S ribosomal subunits (but not with 30S subunits that are part of 70S ribosomes or polysomes). Required for efficient processing of 16S rRNA. May interact with the 5'-terminal helix region of 16S rRNA. The polypeptide is Ribosome-binding factor A (Burkholderia mallei (strain NCTC 10229)).